The chain runs to 344 residues: Arginine N-succinyltransferase (344 aa).

Leu125 contacts succinyl-CoA. His229 functions as the Proton donor in the catalytic mechanism.

The protein belongs to the arginine N-succinyltransferase family.

The enzyme catalyses succinyl-CoA + L-arginine = N(2)-succinyl-L-arginine + CoA + H(+). It functions in the pathway amino-acid degradation; L-arginine degradation via AST pathway; L-glutamate and succinate from L-arginine: step 1/5. In terms of biological role, catalyzes the transfer of succinyl-CoA to arginine to produce N(2)-succinylarginine. The polypeptide is Arginine N-succinyltransferase (Shigella sonnei (strain Ss046)).